The primary structure comprises 267 residues: Phosphate import ATP-binding protein PstB 2 (267 aa).

The ABC transporter domain occupies 21-262; the sequence is LSTKDVHVYY…AKLQSTNDYV (242 aa). 53 to 60 contributes to the ATP binding site; the sequence is GPSGSGKS.

The protein belongs to the ABC transporter superfamily. Phosphate importer (TC 3.A.1.7) family. In terms of assembly, the complex is composed of two ATP-binding proteins (PstB), two transmembrane proteins (PstC and PstA) and a solute-binding protein (PstS).

It is found in the cell membrane. It carries out the reaction phosphate(out) + ATP + H2O = ADP + 2 phosphate(in) + H(+). Its function is as follows. Part of the ABC transporter complex PstSACB involved in phosphate import. Responsible for energy coupling to the transport system. In Streptococcus pneumoniae (strain ATCC BAA-255 / R6), this protein is Phosphate import ATP-binding protein PstB 2.